The following is a 329-amino-acid chain: Serpentine receptor class alpha-3 (329 aa).

7 consecutive transmembrane segments (helical) span residues 25-45 (LIYF…LKVI), 57-77 (ILLY…GITI), 104-124 (YLEM…GLLF), 144-164 (GIIT…IIIW), 187-207 (TMFF…SLLI), 238-258 (ICFL…GVFL), and 273-293 (FWVV…ILLI).

The protein belongs to the nematode receptor-like protein sra family.

The protein resides in the membrane. The protein is Serpentine receptor class alpha-3 (sra-3) of Caenorhabditis elegans.